The sequence spans 330 residues: Peptide transport system ATP-binding protein SapD (330 aa).

An ABC transporter domain is found at 6-259; that stretch reads IRNLTIEFKT…PHHPYTQALI (254 aa). Residue 40–47 participates in ATP binding; it reads GESGSGKS.

The protein belongs to the ABC transporter superfamily.

Its subcellular location is the cell inner membrane. In terms of biological role, involved in a peptide intake transport system that plays a role in the resistance to antimicrobial peptides. This is Peptide transport system ATP-binding protein SapD from Salmonella typhimurium (strain LT2 / SGSC1412 / ATCC 700720).